The sequence spans 426 residues: Dihydropyrimidine dehydrogenase (NADP(+)), chloroplastic (426 aa).

A chloroplast-targeting transit peptide spans 1–44; that stretch reads MASMSFALNRFSGLSSKTTLSADFDPSSRRSFLPPTRVGLKISS. A45 is subject to N-acetylalanine. Residues N129 and 188–190 contribute to the substrate site; that span reads NFS. C191 functions as the Nucleophile in the catalytic mechanism. 256–257 provides a ligand contact to substrate; sequence NT. The segment at 395–414 is disordered; the sequence is VEQRKAEKRGLKSDKDWTGD.

It belongs to the dihydropyrimidine dehydrogenase family. In terms of tissue distribution, expressed in roots, leaves, stems, siliques and flowers. Highly expressed ion dry seeds.

It is found in the plastid. It localises to the chloroplast. It carries out the reaction 5,6-dihydrouracil + NADP(+) = uracil + NADPH + H(+). It participates in amino-acid biosynthesis; beta-alanine biosynthesis. In terms of biological role, involved in pyrimidine base degradation. Catalyzes the reduction of uracil to 5,6-dihydrouracil (DHU) by using NADH as a specific cosubstrate and the reduction of thymine to 5,6-dihydrothymine (DHT). Involved in the recycling of nitrogen from nucleobases to general nitrogen metabolism. This is Dihydropyrimidine dehydrogenase (NADP(+)), chloroplastic from Arabidopsis thaliana (Mouse-ear cress).